The sequence spans 135 residues: Class I hydrophobin 15 (135 aa).

The N-terminal stretch at 1 to 21 is a signal peptide; that stretch reads MFAKSATIAIVLAALAGFSAA. Cystine bridges form between C50/C113, C57/C107, C58/C97, and C114/C127. N-linked (GlcNAc...) asparagine glycosylation is present at N131.

Belongs to the fungal hydrophobin family. In terms of assembly, self-assembles to form functional amyloid fibrils called rodlets. Self-assembly into fibrillar rodlets occurs spontaneously at hydrophobic:hydrophilic interfaces and the rodlets further associate laterally to form amphipathic monolayers.

Its subcellular location is the secreted. It is found in the cell wall. In terms of biological role, aerial growth, conidiation, and dispersal of filamentous fungi in the environment rely upon a capability of their secreting small amphipathic proteins called hydrophobins (HPBs) with low sequence identity. Class I can self-assemble into an outermost layer of rodlet bundles on aerial cell surfaces, conferring cellular hydrophobicity that supports fungal growth, development and dispersal; whereas Class II form highly ordered films at water-air interfaces through intermolecular interactions but contribute nothing to the rodlet structure. The polypeptide is Class I hydrophobin 15 (Pleurotus ostreatus (strain PC15) (Oyster mushroom)).